A 231-amino-acid polypeptide reads, in one-letter code: Biosynthetic peptidoglycan transglycosylase (231 aa).

A helical transmembrane segment spans residues 7-27; it reads LLFWLIVVPVLLVLLLQLYFF.

The protein belongs to the glycosyltransferase 51 family.

It localises to the cell inner membrane. The catalysed reaction is [GlcNAc-(1-&gt;4)-Mur2Ac(oyl-L-Ala-gamma-D-Glu-L-Lys-D-Ala-D-Ala)](n)-di-trans,octa-cis-undecaprenyl diphosphate + beta-D-GlcNAc-(1-&gt;4)-Mur2Ac(oyl-L-Ala-gamma-D-Glu-L-Lys-D-Ala-D-Ala)-di-trans,octa-cis-undecaprenyl diphosphate = [GlcNAc-(1-&gt;4)-Mur2Ac(oyl-L-Ala-gamma-D-Glu-L-Lys-D-Ala-D-Ala)](n+1)-di-trans,octa-cis-undecaprenyl diphosphate + di-trans,octa-cis-undecaprenyl diphosphate + H(+). The protein operates within cell wall biogenesis; peptidoglycan biosynthesis. Peptidoglycan polymerase that catalyzes glycan chain elongation from lipid-linked precursors. The chain is Biosynthetic peptidoglycan transglycosylase from Janthinobacterium sp. (strain Marseille) (Minibacterium massiliensis).